The primary structure comprises 340 residues: 4-hydroxy-2-oxovalerate aldolase (340 aa).

The 252-residue stretch at 4 to 255 (VVIHDPTLRD…ATGIDLYALL (252 aa)) folds into the Pyruvate carboxyltransferase domain. 12 to 13 (RD) provides a ligand contact to substrate. Residue Asp13 participates in Mn(2+) binding. The active-site Proton acceptor is the His16. Residues Ser166 and His194 each coordinate substrate. Mn(2+) contacts are provided by His194 and His196.

This sequence belongs to the 4-hydroxy-2-oxovalerate aldolase family.

It carries out the reaction (S)-4-hydroxy-2-oxopentanoate = acetaldehyde + pyruvate. This chain is 4-hydroxy-2-oxovalerate aldolase, found in Streptomyces griseus subsp. griseus (strain JCM 4626 / CBS 651.72 / NBRC 13350 / KCC S-0626 / ISP 5235).